Here is a 219-residue protein sequence, read N- to C-terminus: ATP phosphoribosyltransferase (219 aa).

The protein belongs to the ATP phosphoribosyltransferase family. Short subfamily. Heteromultimer composed of HisG and HisZ subunits.

It localises to the cytoplasm. It catalyses the reaction 1-(5-phospho-beta-D-ribosyl)-ATP + diphosphate = 5-phospho-alpha-D-ribose 1-diphosphate + ATP. The protein operates within amino-acid biosynthesis; L-histidine biosynthesis; L-histidine from 5-phospho-alpha-D-ribose 1-diphosphate: step 1/9. In terms of biological role, catalyzes the condensation of ATP and 5-phosphoribose 1-diphosphate to form N'-(5'-phosphoribosyl)-ATP (PR-ATP). Has a crucial role in the pathway because the rate of histidine biosynthesis seems to be controlled primarily by regulation of HisG enzymatic activity. The protein is ATP phosphoribosyltransferase of Paramagnetospirillum magneticum (strain ATCC 700264 / AMB-1) (Magnetospirillum magneticum).